Here is a 170-residue protein sequence, read N- to C-terminus: Protein SprT (170 aa).

The SprT-like domain maps to 22–163; it reads LQQANLTLQT…RCRRCGKTLR (142 aa). His78 lines the Zn(2+) pocket. Glu79 is an active-site residue. His82 is a Zn(2+) binding site.

This sequence belongs to the SprT family. The cofactor is Zn(2+).

It is found in the cytoplasm. The polypeptide is Protein SprT (Pectobacterium atrosepticum (strain SCRI 1043 / ATCC BAA-672) (Erwinia carotovora subsp. atroseptica)).